Reading from the N-terminus, the 501-residue chain is uncharacterized protein (501 aa).

A helical membrane pass occupies residues 26–46 (ILLLLLGLIVLVNIGINVATM). 2 disordered regions span residues 316 to 384 (RGTE…VRRR) and 409 to 501 (EASH…EKLN). Over residues 476 to 490 (RSSSLPPASTSTLRP) the composition is skewed to low complexity.

The protein localises to the membrane. This is an uncharacterized protein from Homo sapiens (Human).